We begin with the raw amino-acid sequence, 346 residues long: NADH-ubiquinone oxidoreductase chain 2 (346 aa).

Helical transmembrane passes span 25–45 (HWILAWTGLEINTLAIIPLIS), 52–72 (AIEATIKYFLTQSTASALILF), 95–115 (CLMLTMAIAIKLGLVPFHFWF), 124–144 (LITALLLSTLMKLPPITLLLL), 149–169 (LNTTLLTLLAISSTLIGGWMG), 178–198 (ILAFSSISHLGWMIMIISYNP), 200–220 (LTILTFILYTIMTSTVFLSLA), 242–262 (ATVMLTLLSLAGLPPLTGFMP), 274–294 (EMTPMATIITMLSLLSLFFYL), and 326–346 (AILTALSTTLLPLSPLIITML).

This sequence belongs to the complex I subunit 2 family. In terms of assembly, core subunit of respiratory chain NADH dehydrogenase (Complex I) which is composed of 45 different subunits.

The protein resides in the mitochondrion inner membrane. It carries out the reaction a ubiquinone + NADH + 5 H(+)(in) = a ubiquinol + NAD(+) + 4 H(+)(out). Functionally, core subunit of the mitochondrial membrane respiratory chain NADH dehydrogenase (Complex I) which catalyzes electron transfer from NADH through the respiratory chain, using ubiquinone as an electron acceptor. Essential for the catalytic activity and assembly of complex I. This is NADH-ubiquinone oxidoreductase chain 2 (MT-ND2) from Gallus gallus (Chicken).